The chain runs to 401 residues: S-adenosylmethionine synthase (401 aa).

135-140 is a binding site for ATP; the sequence is GHGSGD.

This sequence belongs to the AdoMet synthase 2 family. Mg(2+) serves as cofactor.

It carries out the reaction L-methionine + ATP + H2O = S-adenosyl-L-methionine + phosphate + diphosphate. The protein operates within amino-acid biosynthesis; S-adenosyl-L-methionine biosynthesis; S-adenosyl-L-methionine from L-methionine: step 1/1. Functionally, catalyzes the formation of S-adenosylmethionine from methionine and ATP. The polypeptide is S-adenosylmethionine synthase (mat) (Methanothermobacter thermautotrophicus (strain ATCC 29096 / DSM 1053 / JCM 10044 / NBRC 100330 / Delta H) (Methanobacterium thermoautotrophicum)).